The following is a 104-amino-acid chain: uncharacterized protein (104 aa).

Transmembrane regions (helical) follow at residues 26 to 46 and 70 to 90; these read IGTG…FTFF and GLLG…IIAI.

Its subcellular location is the membrane. This is an uncharacterized protein from Acanthamoeba polyphaga mimivirus (APMV).